Reading from the N-terminus, the 327-residue chain is Phenylalanine--tRNA ligase alpha subunit (327 aa).

Glu-252 is a binding site for Mg(2+).

This sequence belongs to the class-II aminoacyl-tRNA synthetase family. Phe-tRNA synthetase alpha subunit type 1 subfamily. In terms of assembly, tetramer of two alpha and two beta subunits. Mg(2+) serves as cofactor.

Its subcellular location is the cytoplasm. The catalysed reaction is tRNA(Phe) + L-phenylalanine + ATP = L-phenylalanyl-tRNA(Phe) + AMP + diphosphate + H(+). This Glaesserella parasuis serovar 5 (strain SH0165) (Haemophilus parasuis) protein is Phenylalanine--tRNA ligase alpha subunit.